The following is an 874-amino-acid chain: MIDTSTITNPQTLPVEAITQENLRNTLEQFAEQQKQQFIQHRPVTDLVLSRSTFIDKLLIRLWEHYEVNQYPDIALVAVGGYGRGELHPLSDVDILILSAQPLSDETGRIVSKFLTFLWDLRLEVGHSVRTIDDCIEIGNDDLTVATNLTEARILCGSEDVFQCLQERINAGNFWPSEDFYRAKLEEQKTRHARYHDTTYNLEPDIKSSPGGLRDIHTLSWVARRHFGATSLLEMSRFGFLTDAEYRELVECQDSLWRIRFALHIELRRYDNRLTFSHQPSVAENLGYTGEGNRGVEMMMKEFYRTLRRVLELNKMLLQLFDQAILDNGKTVETIQLSDDFQIRGHLIEATKPALFQARPETILDMFLHIAQNGDIEGIAAPTLRQLRTARQRLNVFLVDIPEAREKFMELVRQPNTLQKAFRLMHRHGVLSAYLPQWSQIVGQMQFDLFHVYTVDEHSVRLIKNLNKFNDPENRERHPICCEVYPRIIKKELLTIAAIFHDIAKGRGGDHSELGAIEARKFCIQHGLSRPETNLIAWLVQKHLLMSVTAQRRDIYDPEVVAEFAKEVRDEERLDYLICLTVADICATNQELWNSWKRTLLAELYYSTQKALRRGLENTPDVRDRIRHNQQLSSAILRGKGFAPREIEVLWKRFKADYFLRHTHKQLAWHAEALLTHDHDKPLILLSKKATRGGTEVFVYNKDKAKLFAIVVSELDKKNLSVHDAQIMNSKDGYTLDTFMVLDPSGKTIPENRHNTIRRALVNALTKMKSERKNKRAPRKLMHFNVKTQVDFLPTKTGKKTTMELIALDTPGLLARIGAVFAKQKVSLQAAKITTIGERAEDFFILVNEHGSPLTEEHQQALKEALIIKLTPQD.

Residues 1-336 are uridylyltransferase; the sequence is MIDTSTITNP…DNGKTVETIQ (336 aa). The interval 337 to 695 is uridylyl-removing; that stretch reads LSDDFQIRGH…LSKKATRGGT (359 aa). Positions 455 to 577 constitute an HD domain; it reads VDEHSVRLIK…VRDEERLDYL (123 aa). ACT domains are found at residues 696–779 and 802–874; these read EVFV…RAPR and TMEL…TPQD.

This sequence belongs to the GlnD family. Mg(2+) is required as a cofactor.

It carries out the reaction [protein-PII]-L-tyrosine + UTP = [protein-PII]-uridylyl-L-tyrosine + diphosphate. The catalysed reaction is [protein-PII]-uridylyl-L-tyrosine + H2O = [protein-PII]-L-tyrosine + UMP + H(+). Its activity is regulated as follows. Uridylyltransferase (UTase) activity is inhibited by glutamine, while glutamine activates uridylyl-removing (UR) activity. Its function is as follows. Modifies, by uridylylation and deuridylylation, the PII regulatory proteins (GlnB and homologs), in response to the nitrogen status of the cell that GlnD senses through the glutamine level. Under low glutamine levels, catalyzes the conversion of the PII proteins and UTP to PII-UMP and PPi, while under higher glutamine levels, GlnD hydrolyzes PII-UMP to PII and UMP (deuridylylation). Thus, controls uridylylation state and activity of the PII proteins, and plays an important role in the regulation of nitrogen assimilation and metabolism. The polypeptide is Bifunctional uridylyltransferase/uridylyl-removing enzyme (Photobacterium profundum (strain SS9)).